Consider the following 192-residue polypeptide: Apoptosis regulator BAX (192 aa).

N-acetylmethionine is present on Met-1. The short motif at 59-73 is the BH3 element; sequence LSECLKRIGDELDSN. The BH1 signature appears at 98-118; it reads DMFSDGNFNWGRVVALFYFAS. Lys-128 is covalently cross-linked (Glycyl lysine isopeptide (Lys-Gly) (interchain with G-Cter in ubiquitin)). The short motif at 150–165 is the BH2 element; that stretch reads GWIQDQGGWDGLLSYF. The helical transmembrane segment at 172–192 threads the bilayer; that stretch reads TVTIFVAGVLTASLTIWKKMG. Lys-190 is covalently cross-linked (Glycyl lysine isopeptide (Lys-Gly) (interchain with G-Cter in ubiquitin)).

This sequence belongs to the Bcl-2 family. As to quaternary structure, homodimer. Forms higher oligomers under stress conditions. Forms heterooligomers with BAK. Interacts with BCL2L11. Interaction with BCL2L11 promotes BAX oligomerization and association with mitochondrial membranes, with subsequent release of cytochrome c. Forms heterodimers with BCL2, BCL2L1 isoform Bcl-X(L), BCL2L2, MCL1 and A1. Interacts with SH3GLB1. Interacts with humanin; forms fibers with humanin which results in BAX conformational changes and sequestering of BAX into the fibers, preventing BAX activation. Interacts with SFN and YWHAZ; the interaction occurs in the cytoplasm. Under stress conditions, JNK-mediated phosphorylation of SFN and YWHAZ, releases BAX to mitochondria. Interacts with RNF144B, which regulates the ubiquitin-dependent stability of BAX. Interacts with CLU under stress conditions that cause a conformation change leading to BAX oligomerization and association with mitochondria. Does not interact with CLU in unstressed cells. Interacts with FAIM2/LFG2. Interacts with RTL10/BOP. Interacts (via a C-terminal 33 residues) with NOL3 (via CARD domain); inhibits BAX activation and translocation and consequently cytochrome c release from mitochondria. Interacts with GIMAP3/IAN4 and GIMAP5/IAN5; this interaction is increased, when cells initiate apoptosis upon IL2 withdrawal. Interacts with IRF3; the interaction is direct, increases upon Sendai virus infection and mediates the formation of the apoptosis complex TOMM70:HSP90AA1:IRF3:BAX. Interacts with MOAP1, facilitating BAX-dependent mitochondrial outer membrane permeabilization and apoptosis. Interacts with BCL2L10/BCL-B. Interacts with non-acetylated XRCC6/Ku70; this interaction leads to BAX sequestration in the cytosol, away from the mitochondria, preventing BAX-mediated apoptosis. Interacts with BCL2A1 and BCL2L1 isoform Bcl-X(L). In terms of assembly, (Microbial infection) Interacts with adenovirus E1B 19K protein; this interaction blocks BAX oligomerization. As to quaternary structure, (Microbial infection) Interacts with human cytomegalovirus/HHV-5 protein vMIA/UL37. (Microbial infection) Interacts with enterovirus protein 2B; this interaction activates BAX-induced apoptosis. Ubiquitinated in the absence of XRCC6/Ku70. Ubiquitination promotes protein degradation. Ubiquitinated on Lys-128 and Lys-190. 'Lys-63'-linked polyubiquitin chains on Lys-128 are removed by USP12. In terms of tissue distribution, expressed in a wide variety of tissues. Isoform Psi is found in glial tumors. Isoform Alpha is expressed in spleen, breast, ovary, testis, colon and brain, and at low levels in skin and lung. Isoform Sigma is expressed in spleen, breast, ovary, testis, lung, colon, brain and at low levels in skin. Isoform Alpha and isoform Sigma are expressed in pro-myelocytic leukemia, histiocytic lymphoma, Burkitt's lymphoma, T-cell lymphoma, lymphoblastic leukemia, breast adenocarcinoma, ovary adenocarcinoma, prostate carcinoma, prostate adenocarcinoma, lung carcinoma, epidermoid carcinoma, small cell lung carcinoma and colon adenocarcinoma cell lines.

It localises to the mitochondrion outer membrane. The protein localises to the cytoplasm. It is found in the nucleus. In terms of biological role, plays a role in the mitochondrial apoptotic process. Under normal conditions, BAX is largely cytosolic via constant retrotranslocation from mitochondria to the cytosol mediated by BCL2L1/Bcl-xL, which avoids accumulation of toxic BAX levels at the mitochondrial outer membrane (MOM). Under stress conditions, undergoes a conformation change that causes translocation to the mitochondrion membrane, leading to the release of cytochrome c that then triggers apoptosis. Promotes activation of CASP3, and thereby apoptosis. In Homo sapiens (Human), this protein is Apoptosis regulator BAX (BAX).